A 128-amino-acid chain; its full sequence is MSEQVTFQSHEDRIVGKHVFGNLYDIDPEDLNNEQLLKDLVLKAVEIAHMNLVEAKSWSFGGKKGGVSVIALIEESHIALHTWNEYNYATLDVYTCGEDSDPQAAFKFIVEALKPRRYQVFFADRSSS.

S76 acts as the Schiff-base intermediate with substrate; via pyruvic acid in catalysis. S76 bears the Pyruvic acid (Ser); by autocatalysis mark. H81 functions as the Proton acceptor; for processing activity in the catalytic mechanism. The active-site Proton donor; for catalytic activity is C96.

Belongs to the prokaryotic AdoMetDC family. Type 1 subfamily. In terms of assembly, heterooctamer of four alpha and four beta chains arranged as a tetramer of alpha/beta heterodimers. It depends on pyruvate as a cofactor. In terms of processing, is synthesized initially as an inactive proenzyme. Formation of the active enzyme involves a self-maturation process in which the active site pyruvoyl group is generated from an internal serine residue via an autocatalytic post-translational modification. Two non-identical subunits are generated from the proenzyme in this reaction, and the pyruvate is formed at the N-terminus of the alpha chain, which is derived from the carboxyl end of the proenzyme. The post-translation cleavage follows an unusual pathway, termed non-hydrolytic serinolysis, in which the side chain hydroxyl group of the serine supplies its oxygen atom to form the C-terminus of the beta chain, while the remainder of the serine residue undergoes an oxidative deamination to produce ammonia and the pyruvoyl group blocking the N-terminus of the alpha chain.

It carries out the reaction L-arginine + H(+) = agmatine + CO2. Its pathway is amine and polyamine biosynthesis; agmatine biosynthesis; agmatine from L-arginine: step 1/1. Its function is as follows. Specifically catalyzes the decarboxylation of L-arginine to agmatine. Has no S-adenosylmethionine decarboxylase (AdoMetDC) activity. In Metallosphaera sedula (strain ATCC 51363 / DSM 5348 / JCM 9185 / NBRC 15509 / TH2), this protein is Arginine decarboxylase proenzyme.